Reading from the N-terminus, the 255-residue chain is uncharacterized protein (255 aa).

N-linked (GlcNAc...) asparagine; by host glycans are attached at residues N16 and N58. 2 helical membrane-spanning segments follow: residues 72–92 (LIYS…TIYY) and 104–124 (LWYI…SHIC).

The protein localises to the membrane. This is an uncharacterized protein from Acanthamoeba polyphaga (Amoeba).